A 356-amino-acid chain; its full sequence is MSL complex subunit 3B (356 aa).

Residues 2–350 (EERTVTLEIP…SEVHYSTRNP (349 aa)) enclose the MRG domain. 2 disordered regions span residues 135 to 210 (TNRS…WQQD) and 225 to 247 (KTPV…SPVF). Positions 142–156 (LSPSLRLLNPSRPQS) are enriched in low complexity. Polar residues-rich tracts occupy residues 178-189 (AVQSLRRSSPHT) and 229-243 (HSRS…SQEG).

Its subcellular location is the nucleus. Functionally, probable non-catalytic component of the MSL histone acetyltransferase complex, a multiprotein complex that mediates the majority of histone H4 acetylation at 'Lys-16' (H4K16ac), an epigenetic mark that prevents chromatin compaction. This is MSL complex subunit 3B from Homo sapiens (Human).